Here is a 241-residue protein sequence, read N- to C-terminus: Nicotinamide riboside kinase (241 aa).

21–29 (GCSSSGKST) serves as a coordination point for ATP. 2 residues coordinate Mg(2+): serine 28 and aspartate 47. Aspartate 47 (proton acceptor) is an active-site residue. Substrate contacts are provided by residues 47-50 (DDFY), 67-68 (WD), and aspartate 68. Arginine 163 contacts ATP. Arginine 164 lines the substrate pocket. Residues arginine 167, 167–169 (RGG), and 213–215 (DVQ) contribute to the ATP site. Residue 169–170 (GY) participates in substrate binding.

The protein belongs to the uridine kinase family. NRK subfamily.

It carries out the reaction beta-nicotinamide D-riboside + ATP = beta-nicotinamide D-ribonucleotide + ADP + H(+). The catalysed reaction is beta-D-ribosylnicotinate + ATP = nicotinate beta-D-ribonucleotide + ADP + H(+). Its pathway is cofactor biosynthesis; NAD(+) biosynthesis. In terms of biological role, catalyzes the phosphorylation of nicotinamide riboside (NR) and nicotinic acid riboside (NaR) to form nicotinamide mononucleotide (NMN) and nicotinic acid mononucleotide (NaMN). The chain is Nicotinamide riboside kinase (NRK1) from Eremothecium gossypii (strain ATCC 10895 / CBS 109.51 / FGSC 9923 / NRRL Y-1056) (Yeast).